The following is a 78-amino-acid chain: Polcalcin Phl p 7 (78 aa).

EF-hand domains are found at residues 1–35 (MADDMERIFKRFDTNGDGKISLSELTDALRTLGST) and 35–70 (TSADEVQRMMAEIDTDGDGFIDFNEFISFCNANPGL). Ca(2+)-binding residues include Asp13, Asn15, Asp17, Lys19, Glu24, Asp48, Asp50, Asp52, and Glu59.

Monomer. As to expression, specifically expressed in pollen.

Its function is as follows. May be involved in the regulation of pollen-tube growth. The polypeptide is Polcalcin Phl p 7 (Phleum pratense (Common timothy)).